We begin with the raw amino-acid sequence, 843 residues long: N-acetyltransferase ESCO1 (843 aa).

The segment at 1–78 (MSIQEKSKEN…SASCSADKTA (78 aa)) is disordered. A compositionally biased stretch (acidic residues) spans 18-28 (SEDENLEEEVE). The span at 66 to 78 (STRSASCSADKTA) shows a compositional bias: polar residues. Ser-202 carries the post-translational modification Phosphoserine. The disordered stretch occupies residues 262–300 (NELRKSAHTQVSTSTKRPQIPLPLVPEHSDDQELEQAGK). Over residues 269–278 (HTQVSTSTKR) the composition is skewed to polar residues. A Glycyl lysine isopeptide (Lys-Gly) (interchain with G-Cter in SUMO2) cross-link involves residue Lys-335. At Ser-415 the chain carries Phosphoserine. Residues 546–584 (DRTFPGSAPNQQHSVLSDEASINRKNRDVPPNHSQLKHD) are disordered. Positions 566-584 (SINRKNRDVPPNHSQLKHD) are enriched in basic and acidic residues. Residues 620 to 644 (VSCNICGMLYTASNPEDETQHLLFH) form a CCHH-type zinc finger. Acetyl-CoA-binding positions include 775–777 (IWV), 783–788 (RKKIAS), and 815–817 (TPD).

Belongs to the acetyltransferase family. ECO subfamily. In terms of assembly, the subunit structure is controversial. Monomer. Homodimer. Post-translationally, phosphorylated during mitosis.

Its subcellular location is the nucleus. The protein resides in the chromosome. It carries out the reaction L-lysyl-[protein] + acetyl-CoA = N(6)-acetyl-L-lysyl-[protein] + CoA + H(+). In terms of biological role, acetyltransferase required for the establishment of sister chromatid cohesion. Couples the processes of cohesion and DNA replication to ensure that only sister chromatids become paired together. In contrast to the structural cohesins, the deposition and establishment factors are required only during S phase. Acts by mediating the acetylation of cohesin component SMC3. This is N-acetyltransferase ESCO1 (Esco1) from Mus musculus (Mouse).